The following is a 621-amino-acid chain: Pre-mRNA-processing protein 45 (621 aa).

5 disordered regions span residues M1–G73, S137–E164, A220–P251, R347–M438, and G542–S621. Residues P36 to P51 are compositionally biased toward low complexity. Composition is skewed to basic and acidic residues over residues T140–E164 and A220–R229. Residues P239–R248 show a composition bias toward pro residues. A compositionally biased stretch (basic and acidic residues) spans G364–P380. Residues D403–G417 are compositionally biased toward acidic residues. Composition is skewed to basic and acidic residues over residues A418–R437 and E594–S621.

This sequence belongs to the SNW family. Associated with the spliceosome.

The protein localises to the nucleus. Its function is as follows. Involved in pre-mRNA splicing. This Mycosarcoma maydis (Corn smut fungus) protein is Pre-mRNA-processing protein 45 (PRP45).